The chain runs to 505 residues: Bile acid-sensitive ion channel (505 aa).

The interval 1–30 is binds the plasma membrane and stabilizes the channel in the closed state; the sequence is MEQTEKSKVYAENGLLEKIKLCLSKKPLPS. Residues 1–61 lie on the Cytoplasmic side of the membrane; that stretch reads MEQTEKSKVY…NIVQNRSKIR (61 aa). Residues 62–82 form a helical membrane-spanning segment; the sequence is RVLWLVVVLGSVSLVTWQIYI. At 83–459 the chain is on the extracellular side; sequence RLLNYFTWPT…GLFCGASLIT (377 aa). Intrachain disulfides connect Cys-112–Cys-207, Cys-185–Cys-192, Cys-298–Cys-377, Cys-315–Cys-373, Cys-328–Cys-350, and Cys-330–Cys-342. 4 N-linked (GlcNAc...) asparagine glycosylation sites follow: Asn-147, Asn-163, Asn-178, and Asn-179. Asn-306 carries N-linked (GlcNAc...) asparagine glycosylation. N-linked (GlcNAc...) asparagine glycosylation is found at Asn-370, Asn-405, and Asn-421. The GAS motif; ion selectivity filter signature appears at 454–456; that stretch reads GAS. Residues 460–480 traverse the membrane as a helical segment; the sequence is IIEIIEYLFTNFYWICIFFLL. Over 481–505 the chain is Cytoplasmic; that stretch reads KISEMTQWTPPPQNHLGNKNRIEEC.

Belongs to the amiloride-sensitive sodium channel (TC 1.A.6) family. ASIC5 subfamily. Forms homotrimeric channels. In terms of tissue distribution, detected in small intestine, duodenum and jejunum. Detected at very low levels in testis and rectum.

The protein resides in the apical cell membrane. The protein localises to the cell membrane. The enzyme catalyses Na(+)(in) = Na(+)(out). It catalyses the reaction Li(+)(in) = Li(+)(out). It carries out the reaction K(+)(in) = K(+)(out). The catalysed reaction is H(+)(in) = H(+)(out). Its activity is regulated as follows. Inhibited by the diuretic drug amiloride. In terms of biological role, forms bile acid-gated sodium channels and may play a role in bile acid-dependent absorption and secretion by epithelial cells of the bile ducts. Displays high selectivity for sodium ions but can also permit the permeation of other cations. The gating could be indirect and the consequence of alterations of the membrane environment of the channel by bile acids. As a sodium channel of type II unipolar brush cells of the vestibulocerebellum, controlling the electrical activity of these cells, could play a role in motor coordination and balance. This chain is Bile acid-sensitive ion channel, found in Homo sapiens (Human).